We begin with the raw amino-acid sequence, 411 residues long: Argininosuccinate synthase (411 aa).

ATP contacts are provided by residues 13–21 (AYSGGLDTS) and Ala40. Positions 91 and 96 each coordinate L-citrulline. Residue Gly121 coordinates ATP. Residues Thr123, Asn127, and Asp128 each contribute to the L-aspartate site. Residue Asn127 coordinates L-citrulline. The L-citrulline site is built by Arg131, Ser182, Ser191, Glu267, and Tyr279.

Belongs to the argininosuccinate synthase family. Type 1 subfamily. In terms of assembly, homotetramer.

It localises to the cytoplasm. The catalysed reaction is L-citrulline + L-aspartate + ATP = 2-(N(omega)-L-arginino)succinate + AMP + diphosphate + H(+). The protein operates within amino-acid biosynthesis; L-arginine biosynthesis; L-arginine from L-ornithine and carbamoyl phosphate: step 2/3. The sequence is that of Argininosuccinate synthase from Bartonella tribocorum (strain CIP 105476 / IBS 506).